An 884-amino-acid polypeptide reads, in one-letter code: Translation initiation factor IF-2 (884 aa).

Residues 93 to 288 form a disordered region; the sequence is VNTPEAEQAK…KGKRKPSTLQ (196 aa). Over residues 99–209 the composition is skewed to basic and acidic residues; sequence EQAKAEEQAQ…KMAAENEGKW (111 aa). Polar residues predominate over residues 216-229; sequence QTESADYHVTTSQH. Residues 231–246 show a composition bias toward basic and acidic residues; the sequence is RAAEDENDAKVEGDRR. Over residues 247–261 the composition is skewed to basic residues; the sequence is SRTRGGKATKQKKGN. Residues 262 to 275 show a composition bias toward basic and acidic residues; sequence KLSESKADREEARA. Residues 383-552 form the tr-type G domain; the sequence is HRAPVVTIMG…LLQAEVLELK (170 aa). The tract at residues 392–399 is G1; that stretch reads GHVDHGKT. 392–399 provides a ligand contact to GTP; sequence GHVDHGKT. Positions 417-421 are G2; the sequence is GITQH. Residues 438–441 form a G3 region; the sequence is DTPG. GTP contacts are provided by residues 438 to 442 and 492 to 495; these read DTPGH and NKID. The tract at residues 492–495 is G4; the sequence is NKID. A G5 region spans residues 528-530; sequence SAK.

Belongs to the TRAFAC class translation factor GTPase superfamily. Classic translation factor GTPase family. IF-2 subfamily.

It localises to the cytoplasm. One of the essential components for the initiation of protein synthesis. Protects formylmethionyl-tRNA from spontaneous hydrolysis and promotes its binding to the 30S ribosomal subunits. Also involved in the hydrolysis of GTP during the formation of the 70S ribosomal complex. The sequence is that of Translation initiation factor IF-2 from Yersinia pestis bv. Antiqua (strain Antiqua).